Reading from the N-terminus, the 318-residue chain is Small ribosomal subunit protein uS3 (318 aa).

Positions 17 to 86 constitute a KH type-2 domain; the sequence is MDEYFAEQLS…NPQIDAQEVK (70 aa). Residues 198–229 show a composition bias toward basic and acidic residues; the sequence is SVEVEEPAEKPAEKPAEKPAEKAAAPKKEAAK. The tract at residues 198–275 is disordered; it reads SVEVEEPAEK…VQAETSEEIE (78 aa). A compositionally biased stretch (pro residues) spans 234–250; it reads APAPEAPAPAPEAPAPA. Over residues 253-275 the composition is skewed to acidic residues; that stretch reads EEAEVAEPEEAEEVQAETSEEIE.

The protein belongs to the universal ribosomal protein uS3 family. As to quaternary structure, part of the 30S ribosomal subunit.

In terms of biological role, binds the lower part of the 30S subunit head. This chain is Small ribosomal subunit protein uS3, found in Methanosarcina acetivorans (strain ATCC 35395 / DSM 2834 / JCM 12185 / C2A).